A 190-amino-acid chain; its full sequence is MATTTATTPPSLTDIRALKYTSSTVSVASPAEIEAITKTWAETFKIPNDVLPLACWDLARAFADVGASSKSELTGDSAALAGVSRKQLAQAIKIHCTIRQFCMYFANIVWNIMLDTKTPPASWSKLGYKEESKFAGFDFFDGVNHPAALMPADGLIRGPSDAEILAHQTAKQVALHRDAKPTWHKRCQLC.

This sequence belongs to the potexvirus capsid protein family.

It localises to the virion. Required for genome encapsidation. Forms ribonucleoprotein complexes along with TGB1 helicase and viral RNA. The protein is Coat protein of White clover mosaic virus (strain M) (WCMV).